A 226-amino-acid polypeptide reads, in one-letter code: 7-cyano-7-deazaguanine synthase (226 aa).

10-20 (FSGGQDSTTLA) provides a ligand contact to ATP. Zn(2+) contacts are provided by cysteine 190, cysteine 205, cysteine 208, and cysteine 211.

It belongs to the QueC family. Zn(2+) is required as a cofactor.

The enzyme catalyses 7-carboxy-7-deazaguanine + NH4(+) + ATP = 7-cyano-7-deazaguanine + ADP + phosphate + H2O + H(+). Its pathway is purine metabolism; 7-cyano-7-deazaguanine biosynthesis. Its function is as follows. Catalyzes the ATP-dependent conversion of 7-carboxy-7-deazaguanine (CDG) to 7-cyano-7-deazaguanine (preQ(0)). The chain is 7-cyano-7-deazaguanine synthase from Helicobacter pylori (strain Shi470).